Reading from the N-terminus, the 367-residue chain is MEEQQIPFQVRTDLAIEAKDMYTESKPEETNDKEIKGVTFKERSVKDIKVSYVDIDEEGEKLLGKKPGSYVTIYADGVKKQDTDRQGQAAQVLAKELEDLMRKNNVTKESTCLVVGLGNWNVTPDALGPMTVEKVLVTSHLFRLQYETVAQGYRDVAAVTPGVMGVTGIETSDIIFGIVEKYKPDLVIAVDALASRSINRVNETIQLSDTGIHPGSGVGNKRKEISKKTLGIPVIAIGVPTVVDAVTITSDTIDYVLKHFGREWKEKDDPSKSLTPAGMSFGNRKLTDEDLPNMEKRKTVLGIVGELSDEEKRKLITEVLTPLGHNLMVTPKEVDGFMIDMAEVLANGINAALHEKVDVDNFANYSR.

Positions Met1–Asp13 are excised as a propeptide. The segment at Lys267–Thr287 is disordered.

The protein belongs to the peptidase A25 family. As to quaternary structure, homotetramer. Autoproteolytically processed. The inactive tetrameric zymogen termed p46 autoprocesses to a smaller form termed p41, which is active only during spore germination.

The catalysed reaction is Endopeptidase action with P4 Glu or Asp, P1 preferably Glu &gt; Asp, P1' hydrophobic and P2' Ala.. Its function is as follows. Initiates the rapid degradation of small, acid-soluble proteins during spore germination. The polypeptide is Germination protease (Oceanobacillus iheyensis (strain DSM 14371 / CIP 107618 / JCM 11309 / KCTC 3954 / HTE831)).